The sequence spans 466 residues: Pyruvate kinase (466 aa).

Arginine 32 is a substrate binding site. K(+) is bound by residues asparagine 34, serine 36, and aspartate 66. 34–37 provides a ligand contact to ATP; sequence NTSH. Arginine 73 serves as a coordination point for ATP. Glutamate 219 is a Mg(2+) binding site. Residues glycine 242, aspartate 243, and threonine 275 each contribute to the substrate site. Aspartate 243 contacts Mg(2+).

The protein belongs to the pyruvate kinase family. Homotetramer. A divalent metal cation is required as a cofactor.

The catalysed reaction is pyruvate + ATP = phosphoenolpyruvate + ADP + H(+). The protein operates within carbohydrate degradation; glycolysis; pyruvate from D-glyceraldehyde 3-phosphate: step 5/5. With respect to regulation, allosterically activated by AMP and inhibited by ATP. This Thermotoga maritima (strain ATCC 43589 / DSM 3109 / JCM 10099 / NBRC 100826 / MSB8) protein is Pyruvate kinase (pyk).